Reading from the N-terminus, the 400-residue chain is Tryptophan synthase beta chain (400 aa).

Residue lysine 92 is modified to N6-(pyridoxal phosphate)lysine.

Belongs to the TrpB family. In terms of assembly, tetramer of two alpha and two beta chains. Pyridoxal 5'-phosphate serves as cofactor.

It carries out the reaction (1S,2R)-1-C-(indol-3-yl)glycerol 3-phosphate + L-serine = D-glyceraldehyde 3-phosphate + L-tryptophan + H2O. The protein operates within amino-acid biosynthesis; L-tryptophan biosynthesis; L-tryptophan from chorismate: step 5/5. Its function is as follows. The beta subunit is responsible for the synthesis of L-tryptophan from indole and L-serine. The chain is Tryptophan synthase beta chain from Leptospira borgpetersenii serovar Hardjo-bovis (strain JB197).